Consider the following 151-residue polypeptide: Large ribosomal subunit protein uL13 (151 aa).

The protein belongs to the universal ribosomal protein uL13 family. In terms of assembly, part of the 50S ribosomal subunit.

Its function is as follows. This protein is one of the early assembly proteins of the 50S ribosomal subunit, although it is not seen to bind rRNA by itself. It is important during the early stages of 50S assembly. The chain is Large ribosomal subunit protein uL13 from Synechocystis sp. (strain ATCC 27184 / PCC 6803 / Kazusa).